Reading from the N-terminus, the 161-residue chain is Urocortin-3 (161 aa).

A signal peptide spans methionine 1–glycine 21. Positions leucine 22–threonine 118 are excised as a propeptide. The disordered stretch occupies residues serine 64–threonine 118. An Isoleucine amide modification is found at isoleucine 157.

Belongs to the sauvagine/corticotropin-releasing factor/urotensin I family. In terms of assembly, binds with high affinity to CRF receptors 2-alpha and 2-beta.

It is found in the secreted. Its function is as follows. Suppresses food intake, delays gastric emptying and decreases heat-induced edema. Might represent an endogenous ligand for maintaining homeostasis after stress. This Homo sapiens (Human) protein is Urocortin-3 (UCN3).